Here is an 81-residue protein sequence, read N- to C-terminus: Cytochrome c oxidase subunit 7B2, mitochondrial (81 aa).

Residues 1 to 25 (MMFPLARNALSSLKIQSILQSMARH) constitute a mitochondrion transit peptide. Over 26–33 (SHVKHSPD) the chain is Mitochondrial matrix. Residues 34 to 60 (FHDKYGNAVLASGTAFCVATWVFTATQ) form a helical membrane-spanning segment. Residues 61–81 (IGIEWNLSPVGRVTPKEWKHQ) lie on the Mitochondrial intermembrane side of the membrane.

Belongs to the cytochrome c oxidase VIIb family. Component of the cytochrome c oxidase (complex IV, CIV), a multisubunit enzyme composed of 14 subunits. The complex is composed of a catalytic core of 3 subunits MT-CO1, MT-CO2 and MT-CO3, encoded in the mitochondrial DNA, and 11 supernumerary subunits COX4I, COX5A, COX5B, COX6A, COX6B, COX6C, COX7A, COX7B, COX7C, COX8 and NDUFA4, which are encoded in the nuclear genome. The complex exists as a monomer or a dimer and forms supercomplexes (SCs) in the inner mitochondrial membrane with NADH-ubiquinone oxidoreductase (complex I, CI) and ubiquinol-cytochrome c oxidoreductase (cytochrome b-c1 complex, complex III, CIII), resulting in different assemblies (supercomplex SCI(1)III(2)IV(1) and megacomplex MCI(2)III(2)IV(2)).

Its subcellular location is the mitochondrion inner membrane. It functions in the pathway energy metabolism; oxidative phosphorylation. In terms of biological role, component of the cytochrome c oxidase, the last enzyme in the mitochondrial electron transport chain which drives oxidative phosphorylation. The respiratory chain contains 3 multisubunit complexes succinate dehydrogenase (complex II, CII), ubiquinol-cytochrome c oxidoreductase (cytochrome b-c1 complex, complex III, CIII) and cytochrome c oxidase (complex IV, CIV), that cooperate to transfer electrons derived from NADH and succinate to molecular oxygen, creating an electrochemical gradient over the inner membrane that drives transmembrane transport and the ATP synthase. Cytochrome c oxidase is the component of the respiratory chain that catalyzes the reduction of oxygen to water. Electrons originating from reduced cytochrome c in the intermembrane space (IMS) are transferred via the dinuclear copper A center (CU(A)) of subunit 2 and heme A of subunit 1 to the active site in subunit 1, a binuclear center (BNC) formed by heme A3 and copper B (CU(B)). The BNC reduces molecular oxygen to 2 water molecules using 4 electrons from cytochrome c in the IMS and 4 protons from the mitochondrial matrix. This Homo sapiens (Human) protein is Cytochrome c oxidase subunit 7B2, mitochondrial (COX7B2).